Here is a 275-residue protein sequence, read N- to C-terminus: Notch homolog 2 N-terminal-like protein B (275 aa).

The N-terminal stretch at 1-25 (MPALRPALLWALLALWLCCATPAHA) is a signal peptide. EGF-like domains are found at residues 26 to 63 (LQCR…EYCQ), 64 to 102 (HRDP…EDCQ), 105 to 143 (TSHP…KECQ), and 144 to 180 (WTDA…QKCE). Disulfide bonds link cysteine 28-cysteine 41, cysteine 35-cysteine 51, cysteine 53-cysteine 62, cysteine 68-cysteine 79, cysteine 73-cysteine 90, cysteine 92-cysteine 101, cysteine 109-cysteine 121, cysteine 115-cysteine 131, cysteine 133-cysteine 142, cysteine 148-cysteine 159, cysteine 153-cysteine 168, cysteine 170-cysteine 179, cysteine 186-cysteine 198, cysteine 192-cysteine 207, cysteine 209-cysteine 218, cysteine 225-cysteine 236, and cysteine 230-cysteine 246. A glycan (N-linked (GlcNAc...) asparagine) is linked at asparagine 46. N-linked (GlcNAc...) asparagine glycosylation occurs at asparagine 155. Residues 182 to 219 (DVNECDIPGHCQHGGICLNLPGSYQCQCLQGFTGQYCD) enclose the EGF-like 5; calcium-binding domain. In terms of domain architecture, EGF-like 6 spans 221-258 (LYVPCAPSPCVNGGTCRQTGDFTFECNCLPETVRRGTE).

Belongs to the NOTCH family. Interacts with NOTCH2. Interacts with DLL1; the interaction is direct. As to expression, expressed in radial glia neural stem cells during cortical development.

The protein resides in the secreted. Human-specific protein that promotes neural progenitor proliferation and evolutionary expansion of the brain neocortex by regulating the Notch signaling pathway. Able to promote neural progenitor self-renewal, possibly by down-regulating neuronal differentiation genes, thereby delaying the differentiation of neuronal progenitors and leading to an overall final increase in neuronal production. Acts by enhancing the Notch signaling pathway via two different mechanisms that probably work in parallel to reach the same effect. Enhances Notch signaling pathway in a non-cell-autonomous manner via direct interaction with NOTCH2. Also promotes Notch signaling pathway in a cell-autonomous manner through inhibition of cis DLL1-NOTCH2 interactions, which promotes neuronal differentiation. The protein is Notch homolog 2 N-terminal-like protein B of Homo sapiens (Human).